We begin with the raw amino-acid sequence, 59 residues long: MAVPFRKTSKSAKNKRRSHLALSAASLVSCTNCGAMIKPHHVCKECGFYKNKEVKVVEA.

The protein belongs to the bacterial ribosomal protein bL32 family.

The polypeptide is Large ribosomal subunit protein bL32 (Mycoplasma capricolum subsp. capricolum (strain California kid / ATCC 27343 / NCTC 10154)).